We begin with the raw amino-acid sequence, 191 residues long: Gene BABR protein 1 (191 aa).

This is Gene BABR protein 1 from Babesia bovis.